A 124-amino-acid chain; its full sequence is Multifunctional methyltransferase subunit TRM112 homolog A (124 aa).

A TRM112 domain is found at 2 to 120 (RLITHNMLSC…NKGIPNMLLH (119 aa)).

Belongs to the TRM112 family. Interacts with TRM9.

Its function is as follows. Acts as an activator of both rRNA/tRNA and protein methyltransferases. Required for TRM9 tRNA methyltransferase activity. Involved in the regulation of cell division progression during organ growth. Required for the expression of cell cycle-related genes, and the G2-M phase progression during organogenesis. In Arabidopsis thaliana (Mouse-ear cress), this protein is Multifunctional methyltransferase subunit TRM112 homolog A.